Consider the following 283-residue polypeptide: Nucleoid occlusion protein (283 aa).

The H-T-H motif DNA-binding region spans 148–167; sequence EALAQRLGKGQSTIANKLRL.

Belongs to the ParB family.

It localises to the cytoplasm. The protein localises to the nucleoid. In terms of biological role, effects nucleoid occlusion by binding relatively nonspecifically to DNA and preventing the assembly of the division machinery in the vicinity of the nucleoid, especially under conditions that disturb the cell cycle. It helps to coordinate cell division and chromosome segregation by preventing the formation of the Z ring through the nucleoid, which would cause chromosome breakage. The protein is Nucleoid occlusion protein (noc) of Bacillus subtilis (strain 168).